Reading from the N-terminus, the 652-residue chain is Trypanothione synthetase (652 aa).

The 141-residue stretch at 34 to 174 (SNKHDHFFSG…QHKDGVWTII (141 aa)) folds into the Peptidase C51 domain. 328 to 330 (RFD) contributes to the ATP binding site. Positions 330, 344, and 346 each coordinate Mg(2+). Residues Lys-513, Lys-548, Gly-555, Gln-583, and 618–620 (IIT) contribute to the ATP site.

This sequence in the C-terminal section; belongs to the glutathionylspermidine synthase preATP-grasp family. The cofactor is Mg(2+). Post-translationally, the N-terminus is blocked.

It carries out the reaction spermidine + glutathione + ATP = glutathionylspermidine + ADP + phosphate + H(+). It catalyses the reaction glutathionylspermidine + glutathione + ATP = trypanothione + ADP + phosphate + H(+). Its function is as follows. Conjugates glutathione (gamma-Glu-Cys-Gly) and glutathionylspermidine to form trypanothione (N(1),N(8)-bis(glutathionyl)spermidine), which is involved in maintaining intracellular thiol redox and in defense against oxidants. The chain is Trypanothione synthetase (TRS) from Crithidia fasciculata.